We begin with the raw amino-acid sequence, 305 residues long: Glycine--tRNA ligase alpha subunit (305 aa).

It belongs to the class-II aminoacyl-tRNA synthetase family. As to quaternary structure, tetramer of two alpha and two beta subunits.

The protein localises to the cytoplasm. The enzyme catalyses tRNA(Gly) + glycine + ATP = glycyl-tRNA(Gly) + AMP + diphosphate. The polypeptide is Glycine--tRNA ligase alpha subunit (Ligilactobacillus salivarius (strain UCC118) (Lactobacillus salivarius)).